A 334-amino-acid chain; its full sequence is Fructose-1,6-bisphosphatase class 1 (334 aa).

The Mg(2+) site is built by Glu-90, Asp-113, Leu-115, and Asp-116. Residues 116 to 119 (DGSS), Asn-209, Tyr-242, and Lys-272 contribute to the substrate site. A Mg(2+)-binding site is contributed by Glu-278.

This sequence belongs to the FBPase class 1 family. As to quaternary structure, homotetramer. Mg(2+) serves as cofactor.

It localises to the cytoplasm. The enzyme catalyses beta-D-fructose 1,6-bisphosphate + H2O = beta-D-fructose 6-phosphate + phosphate. Its pathway is carbohydrate biosynthesis; gluconeogenesis. The protein is Fructose-1,6-bisphosphatase class 1 of Actinobacillus pleuropneumoniae serotype 5b (strain L20).